Consider the following 506-residue polypeptide: MSTQNYHIVAVPPNEWGHMRPMIAFLARLVAVSLNSVDITVTLIIAESAVAKARTELSIQLAGEGIQSAESRFEVVPTAVHMFWPADAYLPALKATYAEVIKKKEPDFALLESMIHPFFDVVRSSATKPIKVGAWLPVALPSWTSMAPICYIRDDPQAYVKQVETTMAEKGLGYMEAASDAYLSHVNGRVLRIPGFPEMTDYEGFPQEPPVLLPVAMVVDWVFGIRDADILVTSTAQALERQGLQVFSKWLKEQPKHSDILAVGPLTSQRTPEVARKEKEEADAGGFTAFLDAWAAKKGPKSVLYICFGSVLLPAEIEHLYAVMRVLLELQIPFIMVLSDAARAALPADLAAAVRDSGLVKLTPWAPQQYILAHAAVGWFLSHCGINGTLESLCLRVPMVCWPLFADQPVLSILVAQVYGCGYELGEVRKGFGLKYRASTGKTPGGTVEDVTREAREVFSKAFFNKAERAKVDANLEKMATELNAAWDAEGDARASALALLDFIRK.

It belongs to the UDP-glycosyltransferase family.

The enzyme catalyses 11-O-acetylcyathatriol + UDP-alpha-D-xylose = erinacine Q + UDP + H(+). It catalyses the reaction 11-O-acetylcyathatriol + UDP-alpha-D-glucose = erinacine Q2 + UDP + H(+). The protein operates within secondary metabolite biosynthesis. Functionally, UDP-glycosyltransferase; part of the gene cluster that mediates the biosynthesis of erinacines, cyathane-xylosides that show unique biological activities, including leishmanicidal activity, stimulating activity for nerve growth-factor synthesis, and agonistic activity toward the kappa opioid receptor. Within the pathway, eriJ tranfers xylose from UDP-xylose onto C-14 of 11-O-acetyl-cyathatriol to form eracine Q, and, at a lower rate, glucose from UDP-D-glucose to produce eracine Q2. The first step of the erinacines biosynthesis pathway is catalyzed by the geranylgeranyl diphosphate (GGPP) synthase eriE via conversion of farnesyl pyrophosphate and isopentyl pyrophosphate into geranylgeranyl pyrophosphate (GGPP). GGPP is then substrate of the diterpene cyclase eriG for the production of cyatha-3,12-diene. The cytochrome P450 monooxygenase eriI then hydroxylates cyatha-3,12-diene at C-14 of the seven-membered ring to produce erinacol, which is further hydroxylated at C-15 by the cytochrome P450 monooxygenase eriC to yield cyathadiol. The cytochrome P450 monooxygenase eriA then catalyzes C-11 hydroxylation in the presence of the short chain dehydrogenase/reductase (SDR) eriH, which leads to the production of cyathatriol. The acetyltransferase eriL converts cyathatriol into 11-O-acetyl-cyathatriol. The SDR eriH catalyzes further oxidation of 11-O-acetyl-cyathatriol into 1-O-acetylcyathin A3. Finally, the glycosyl transferase eriJ tranfers xylose from UDP-xylose onto C-14 of 11-O-acetyl-cyathatriol to form eracine Q. EriJ is also able to convert 11-O-acetyl-cyathatriol to eracine Q2 by using UDP-D-glucose as cosubstrate, but at a lower rate. This Hericium erinaceus (Lion's mane mushroom) protein is UDP-glycosyltransferase eriJ.